Reading from the N-terminus, the 686-residue chain is Putative pentatricopeptide repeat-containing protein At3g49142 (686 aa).

PPR repeat units lie at residues 73-103 (NSSL…IPER), 104-138 (NVII…NVRP), 139-173 (DHYT…GLSS), 174-204 (TLFV…MSRR), 205-239 (DVVS…KISH), 240-272 (DAGT…MGKK), 273-307 (SLVS…GFEP), 308-342 (DAVS…KLIP), 343-373 (NLLL…MKSR), 374-408 (DVVS…GLVP), 409-439 (DSIA…MTDH), and 445-475 (RLEH…MSME). Residues 480 to 555 (VWGALLGACR…NPGASNVEVN (76 aa)) are type E motif. A type E(+) motif region spans residues 556–586 (RIIHTFLVGDRSHPQSDEIYRELDVLVKKMK). Residues 587–686 (ELGYVPDSES…FGVCSCGDYW (100 aa)) are type DYW motif.

It belongs to the PPR family. PCMP-H subfamily.

The chain is Putative pentatricopeptide repeat-containing protein At3g49142 (PCMP-H77) from Arabidopsis thaliana (Mouse-ear cress).